A 72-amino-acid polypeptide reads, in one-letter code: Putative membrane protein insertion efficiency factor (72 aa).

It belongs to the UPF0161 family.

Its subcellular location is the cell inner membrane. In terms of biological role, could be involved in insertion of integral membrane proteins into the membrane. The protein is Putative membrane protein insertion efficiency factor of Myxococcus xanthus (strain DK1622).